The chain runs to 118 residues: MCFPVGGLLPYLALRSVAYICVFGDSSRAPDLIREAFESPHFKRFDGAGTYKEAKGRCGMRFADVVNGAFGQISDMADKVGKGEPEVWCIWKKRGEVEMLLKVKEYRKGYGSGKRRRR.

The protein belongs to the UPF0329 family.

This chain is UPF0329 protein ECU03_0030/ECU05_0040/ECU06_0010/ECU06_1710/ECU11_0010, found in Encephalitozoon cuniculi (strain GB-M1) (Microsporidian parasite).